A 37-amino-acid chain; its full sequence is Large ribosomal subunit protein bL36 (37 aa).

Belongs to the bacterial ribosomal protein bL36 family.

The protein is Large ribosomal subunit protein bL36 of Helicobacter pylori (strain HPAG1).